Reading from the N-terminus, the 188-residue chain is Inosine triphosphate pyrophosphatase (188 aa).

7–12 (TGNAGK) lines the ITP pocket. Mg(2+) is bound at residue glutamate 36. Residues lysine 48, 64–65 (DT), lysine 81, 140–143 (FGWN), lysine 163, and 168–169 (HR) each bind ITP.

This sequence belongs to the HAM1 NTPase family. As to quaternary structure, homodimer. The cofactor is Mg(2+). Mn(2+) is required as a cofactor.

It is found in the cytoplasm. It localises to the nucleus. The catalysed reaction is ITP + H2O = IMP + diphosphate + H(+). It catalyses the reaction dITP + H2O = dIMP + diphosphate + H(+). It carries out the reaction XTP + H2O = XMP + diphosphate + H(+). Functionally, pyrophosphatase that hydrolyzes non-canonical purine nucleotides such as inosine triphosphate (ITP), deoxyinosine triphosphate (dITP) or xanthosine 5'-triphosphate (XTP) to their respective monophosphate derivatives. The enzyme does not distinguish between the deoxy- and ribose forms. Probably excludes non-canonical purines from RNA and DNA precursor pools, thus preventing their incorporation into RNA and DNA and avoiding chromosomal lesions. The protein is Inosine triphosphate pyrophosphatase of Yarrowia lipolytica (strain CLIB 122 / E 150) (Yeast).